The primary structure comprises 240 residues: Cysteine-rich venom protein ablomin (240 aa).

The signal sequence occupies residues Met-1–Gly-19. The SCP domain maps to Val-38–Tyr-166. 8 disulfides stabilise this stretch: Cys-75/Cys-153, Cys-92/Cys-167, Cys-148/Cys-164, Cys-186/Cys-193, Cys-189/Cys-198, Cys-202/Cys-235, Cys-211/Cys-229, and Cys-220/Cys-233. In terms of domain architecture, ShKT spans Cys-202–Cys-235.

It belongs to the CRISP family. Expressed by the venom gland.

Its subcellular location is the secreted. Functionally, blocks contraction of smooth muscle elicited by high potassium-induced depolarization, but does not block caffeine-stimulated contraction. Since high potassium-treatment activates voltage-gated channels and caffeine exposure activates ryanodine receptors, this toxin may target L-type voltage-gated calcium channels (Cav) (and not ryanodine receptors) on smooth muscle. This toxin also shows a little inhibition on cyclic nucleotide-gated CNGA1 channel. The protein is Cysteine-rich venom protein ablomin of Gloydius blomhoffii (Mamushi).